A 188-amino-acid polypeptide reads, in one-letter code: Elongation factor P (188 aa).

This sequence belongs to the elongation factor P family.

It is found in the cytoplasm. Its pathway is protein biosynthesis; polypeptide chain elongation. Its function is as follows. Involved in peptide bond synthesis. Stimulates efficient translation and peptide-bond synthesis on native or reconstituted 70S ribosomes in vitro. Probably functions indirectly by altering the affinity of the ribosome for aminoacyl-tRNA, thus increasing their reactivity as acceptors for peptidyl transferase. This Rhodopseudomonas palustris (strain HaA2) protein is Elongation factor P.